The following is a 212-amino-acid chain: Orotate phosphoribosyltransferase (212 aa).

Lys-26 contacts 5-phospho-alpha-D-ribose 1-diphosphate. 34–35 (FF) lines the orotate pocket. 5-phospho-alpha-D-ribose 1-diphosphate contacts are provided by residues 72-73 (YK), Arg-98, Lys-99, Lys-102, His-104, and 123-131 (DDVITAGTA). Residues Thr-127 and Arg-155 each contribute to the orotate site.

Belongs to the purine/pyrimidine phosphoribosyltransferase family. PyrE subfamily. Homodimer. The cofactor is Mg(2+).

It carries out the reaction orotidine 5'-phosphate + diphosphate = orotate + 5-phospho-alpha-D-ribose 1-diphosphate. It participates in pyrimidine metabolism; UMP biosynthesis via de novo pathway; UMP from orotate: step 1/2. Functionally, catalyzes the transfer of a ribosyl phosphate group from 5-phosphoribose 1-diphosphate to orotate, leading to the formation of orotidine monophosphate (OMP). The chain is Orotate phosphoribosyltransferase from Marinobacter nauticus (strain ATCC 700491 / DSM 11845 / VT8) (Marinobacter aquaeolei).